Reading from the N-terminus, the 147-residue chain is UPF0178 protein IL2341 (147 aa).

The protein belongs to the UPF0178 family.

In Idiomarina loihiensis (strain ATCC BAA-735 / DSM 15497 / L2-TR), this protein is UPF0178 protein IL2341.